Reading from the N-terminus, the 380-residue chain is D-alanine--D-alanine ligase (380 aa).

The region spanning 142–348 (KQVLTAHGIR…YADLIDRLIE (207 aa)) is the ATP-grasp domain. 172 to 227 (QSRLGDNVFIKPANQGSSVGIHKASNVQEYLDGVADAFRYDYKVLVEQTIDGPQEV) lines the ATP pocket. Residues D302, E315, and N317 each contribute to the Mg(2+) site.

This sequence belongs to the D-alanine--D-alanine ligase family. Requires Mg(2+) as cofactor. The cofactor is Mn(2+).

It is found in the cytoplasm. The catalysed reaction is 2 D-alanine + ATP = D-alanyl-D-alanine + ADP + phosphate + H(+). Its pathway is cell wall biogenesis; peptidoglycan biosynthesis. Cell wall formation. This Levilactobacillus brevis (strain ATCC 367 / BCRC 12310 / CIP 105137 / JCM 1170 / LMG 11437 / NCIMB 947 / NCTC 947) (Lactobacillus brevis) protein is D-alanine--D-alanine ligase.